The following is a 243-amino-acid chain: Cytochrome c1, heme protein (243 aa).

Residues 1–201 (GVDSHPPALP…CSNPWWDERK (201 aa)) lie on the Mitochondrial intermembrane side of the membrane. The 190-residue stretch at 5 to 194 (HPPALPWPHF…VTCFLEWCSN (190 aa)) folds into the Cytochrome c domain. Residues C39, H40, and M159 each contribute to the heme site. A helical transmembrane segment spans residues 202–221 (LLGYKTIATLAVIAVSSGYY). Topologically, residues 222–243 (NRFLSGLWRSRRLAFRPFNYSK) are mitochondrial matrix.

This sequence belongs to the cytochrome c family. As to quaternary structure, component of the ubiquinol-cytochrome c oxidoreductase (cytochrome b-c1 complex, complex III, CIII), a multisubunit enzyme composed of 3 respiratory subunits cytochrome b, cytochrome c1 and Rieske protein, 2 core protein subunits, and additional low-molecular weight protein subunits. The complex exists as an obligatory dimer and forms supercomplexes (SCs) in the inner mitochondrial membrane with cytochrome c oxidase (complex IV, CIV). Requires heme as cofactor.

It is found in the mitochondrion inner membrane. The enzyme catalyses a quinol + 2 Fe(III)-[cytochrome c](out) = a quinone + 2 Fe(II)-[cytochrome c](out) + 2 H(+)(out). In terms of biological role, component of the ubiquinol-cytochrome c oxidoreductase, a multisubunit transmembrane complex that is part of the mitochondrial electron transport chain which drives oxidative phosphorylation. The respiratory chain contains 3 multisubunit complexes succinate dehydrogenase (complex II, CII), ubiquinol-cytochrome c oxidoreductase (cytochrome b-c1 complex, complex III, CIII) and cytochrome c oxidase (complex IV, CIV), that cooperate to transfer electrons derived from NADH and succinate to molecular oxygen, creating an electrochemical gradient over the inner membrane that drives transmembrane transport and the ATP synthase. The cytochrome b-c1 complex catalyzes electron transfer from ubiquinol to cytochrome c, linking this redox reaction to translocation of protons across the mitochondrial inner membrane, with protons being carried across the membrane as hydrogens on the quinol. In the process called Q cycle, 2 protons are consumed from the matrix, 4 protons are released into the intermembrane space and 2 electrons are passed to cytochrome c. Cytochrome c1 is a catalytic core subunit containing a c-type heme. It transfers electrons from the [2Fe-2S] iron-sulfur cluster of the Rieske protein to cytochrome c. The sequence is that of Cytochrome c1, heme protein from Euglena gracilis.